A 330-amino-acid polypeptide reads, in one-letter code: Pantothenate synthetase 2 (330 aa).

The active-site Proton donor is the His-55. ATP-binding positions include 167–170, Val-196, and 204–207; these read GEKD and ASSR.

This sequence belongs to the pantothenate synthetase family. As to quaternary structure, homodimer.

It is found in the cytoplasm. The enzyme catalyses (R)-pantoate + beta-alanine + ATP = (R)-pantothenate + AMP + diphosphate + H(+). The protein operates within cofactor biosynthesis; (R)-pantothenate biosynthesis; (R)-pantothenate from (R)-pantoate and beta-alanine: step 1/1. Its function is as follows. Catalyzes the condensation of pantoate with beta-alanine in an ATP-dependent reaction via a pantoyl-adenylate intermediate. This chain is Pantothenate synthetase 2, found in Frankia alni (strain DSM 45986 / CECT 9034 / ACN14a).